A 530-amino-acid chain; its full sequence is Cation transporter HKT2;1 (530 aa).

The Cytoplasmic portion of the chain corresponds to 1–40 (MTSIYHDFIHNKLQSFGRIGRYFVNFVVLAHRFIALHIHP). Helical transmembrane passes span 41–61 (FWIQLSYFLLISILGSVLLMF) and 102–122 (IVVITLLMLLGGEVFVSFLGL). Residues 123 to 186 (MLRLNHKHNP…DLKRSKRLRW (64 aa)) are Cytoplasmic-facing. 2 helical membrane passes run 187–207 (FLGFVVFSYFVVIHVAGFLLV) and 260–280 (GLLLLFIGQILAGNTLYPLFL). At 281–317 (RLLIWFLGKVTKLRELKLMIKNPEELQYDYLLPKLPT) the chain is on the cytoplasmic side. A run of 2 helical transmembrane segments spans residues 318-338 (AFLASTVIGLMASLVTLFGAV) and 372-392 (IDCSLIAPAVLVLFIILMYLP). The Cytoplasmic segment spans residues 393-418 (PSTTFALSNGDEKTANKKAKRKLGLV). 2 consecutive transmembrane segments (helical) span residues 419-439 (VQNLAFSQLACISVFVIVAFI) and 494-514 (SLSGWWSDEGKLLLVFVMLYG). Residues 515-530 (RLKAFTKGTGEYWRLW) are Cytoplasmic-facing.

Belongs to the TrkH potassium transport family. HKT (TC 2.A.38.3) subfamily. In terms of tissue distribution, expressed in epidermis and vascular tissue of endodermis in roots, and in cells surrounding the vasculature in leaves.

The protein resides in the membrane. It carries out the reaction Na(+)(in) = Na(+)(out). Seems to be involved in regulation of potassium-sodium homeostasis. Seems to act as a high-affinity sodium transporter, which mediates increased sodium uptake in roots under potassium deficiency and contributes to sodium accumulation and salt toxicity. Involved in nutritional sodium uptake and distribution in potassium-starved roots to allow plant growth. May also act as a potassium transporter. Functions as a sodium-potassium cotransporter. The chain is Cation transporter HKT2;1 from Oryza sativa subsp. indica (Rice).